A 618-amino-acid polypeptide reads, in one-letter code: Probable Xaa-Pro aminopeptidase P (618 aa).

Asp-414, Asp-425, Glu-523, and Glu-537 together coordinate Mn(2+).

The protein belongs to the peptidase M24B family. Mn(2+) is required as a cofactor.

It carries out the reaction Release of any N-terminal amino acid, including proline, that is linked to proline, even from a dipeptide or tripeptide.. Functionally, catalyzes the removal of a penultimate prolyl residue from the N-termini of peptides. The protein is Probable Xaa-Pro aminopeptidase P (AMPP) of Metarhizium robertsii (strain ARSEF 23 / ATCC MYA-3075) (Metarhizium anisopliae (strain ARSEF 23)).